A 152-amino-acid polypeptide reads, in one-letter code: MSEKYVVTWDMLQIHARTMAKLLLPAEQWKGIIAVSRGGLVPGALLARELGIRHVDTVCIASYDHDNQRDLNVLKRAEADGEGFIVVDDLVDTGVTAKAIREMYPKAHFVTIFAKPAGRPLVDDYIIDIPQNTWIEQPWDMGVVFVSPLAGK.

Residues 37–38, Arg69, and 88–96 each bind 5-phospho-alpha-D-ribose 1-diphosphate; these read RG and DDLVDTGVT. GMP is bound at residue Arg69. Asp89 contacts Mg(2+). Guanine contacts are provided by Asp92 and Ile135. Residues Asp92 and Ile135 each contribute to the xanthine site. GMP-binding positions include 92–96 and 134–135; these read DTGVT and WI.

This sequence belongs to the purine/pyrimidine phosphoribosyltransferase family. XGPT subfamily. As to quaternary structure, homotetramer. Mg(2+) serves as cofactor.

Its subcellular location is the cell inner membrane. The enzyme catalyses GMP + diphosphate = guanine + 5-phospho-alpha-D-ribose 1-diphosphate. It carries out the reaction XMP + diphosphate = xanthine + 5-phospho-alpha-D-ribose 1-diphosphate. The catalysed reaction is IMP + diphosphate = hypoxanthine + 5-phospho-alpha-D-ribose 1-diphosphate. It participates in purine metabolism; GMP biosynthesis via salvage pathway; GMP from guanine: step 1/1. Its pathway is purine metabolism; XMP biosynthesis via salvage pathway; XMP from xanthine: step 1/1. Its function is as follows. Purine salvage pathway enzyme that catalyzes the transfer of the ribosyl-5-phosphate group from 5-phospho-alpha-D-ribose 1-diphosphate (PRPP) to the N9 position of the 6-oxopurines guanine and xanthine to form the corresponding ribonucleotides GMP (guanosine 5'-monophosphate) and XMP (xanthosine 5'-monophosphate), with the release of PPi. To a lesser extent, also acts on hypoxanthine. This is Xanthine-guanine phosphoribosyltransferase from Sodalis glossinidius (strain morsitans).